Reading from the N-terminus, the 125-residue chain is Small ribosomal subunit protein uS12c (125 aa).

The protein belongs to the universal ribosomal protein uS12 family. Part of the 30S ribosomal subunit.

The protein localises to the plastid. It localises to the chloroplast. In terms of biological role, with S4 and S5 plays an important role in translational accuracy. Located at the interface of the 30S and 50S subunits. This is Small ribosomal subunit protein uS12c (rps12) from Oltmannsiellopsis viridis (Marine flagellate).